The following is a 240-amino-acid chain: Ribosomal RNA small subunit methyltransferase G (240 aa).

S-adenosyl-L-methionine-binding positions include Gly-80, Phe-85, 103–105, 131–132, and Arg-150; these read DSS and AE.

It belongs to the methyltransferase superfamily. RNA methyltransferase RsmG family.

It is found in the cytoplasm. Specifically methylates the N7 position of a guanine in 16S rRNA. The polypeptide is Ribosomal RNA small subunit methyltransferase G (Thermoanaerobacter sp. (strain X514)).